A 554-amino-acid chain; its full sequence is Dihydroxy-acid dehydratase (554 aa).

Asp78 contacts Mg(2+). Cys119 serves as a coordination point for [2Fe-2S] cluster. Mg(2+) is bound by residues Asp120 and Lys121. Lys121 bears the N6-carboxylysine mark. Cys192 provides a ligand contact to [2Fe-2S] cluster. Residue Glu443 coordinates Mg(2+). Ser469 functions as the Proton acceptor in the catalytic mechanism.

Belongs to the IlvD/Edd family. In terms of assembly, homodimer. [2Fe-2S] cluster serves as cofactor. Mg(2+) is required as a cofactor.

The catalysed reaction is (2R)-2,3-dihydroxy-3-methylbutanoate = 3-methyl-2-oxobutanoate + H2O. It catalyses the reaction (2R,3R)-2,3-dihydroxy-3-methylpentanoate = (S)-3-methyl-2-oxopentanoate + H2O. Its pathway is amino-acid biosynthesis; L-isoleucine biosynthesis; L-isoleucine from 2-oxobutanoate: step 3/4. The protein operates within amino-acid biosynthesis; L-valine biosynthesis; L-valine from pyruvate: step 3/4. Functions in the biosynthesis of branched-chain amino acids. Catalyzes the dehydration of (2R,3R)-2,3-dihydroxy-3-methylpentanoate (2,3-dihydroxy-3-methylvalerate) into 2-oxo-3-methylpentanoate (2-oxo-3-methylvalerate) and of (2R)-2,3-dihydroxy-3-methylbutanoate (2,3-dihydroxyisovalerate) into 2-oxo-3-methylbutanoate (2-oxoisovalerate), the penultimate precursor to L-isoleucine and L-valine, respectively. The sequence is that of Dihydroxy-acid dehydratase from Clostridium novyi (strain NT).